A 200-amino-acid chain; its full sequence is MAKVQILNMVVLDNPCPFHNPFQFEITFECIEDLPDDLEWKIIYVGSAESEEYDQTLDSVLVGPVPAGRHMFVFQADAPNCSLIPESDAVGVTVVLITCTYRGQEFIRVGYYVNNEYSDPELRENPPLKAHFGQLQRNILASNPRVTRFHINWECTSEAKMEDIENVDPASNTMLPPNCAPSKGLAAALNTLPENSMDCM.

This sequence belongs to the ASF1 family. In terms of assembly, interacts with histone H3 (including both histone H3.1 and H3.3) and histone H4.

It is found in the nucleus. Its function is as follows. Histone chaperone that facilitates histone deposition and histone exchange and removal during nucleosome assembly and disassembly. The sequence is that of Histone chaperone asf1a-B (asf1ab) from Xenopus laevis (African clawed frog).